A 412-amino-acid chain; its full sequence is Class E basic helix-loop-helix protein 40 (412 aa).

An essential for interaction with BMAL1, E-box binding and repressor activity against the CLOCK-BMAL1 heterodimer region spans residues 1–139 (MERIPSAQPP…LSGRNVETGQ (139 aa)). Positions 52 to 107 (TYKLPHRLIEKKRRDRINECIAQLKDLLPEHLKLTTLGHLEKAVVLELTLKHVKAL) constitute a bHLH domain. Positions 75 to 79 (LKDLL) are necessary for interaction with RXRA and repressor activity against RXRA. The Orange domain maps to 142 to 175 (FCSGFQTCAREVLQYLAKHENTRDLKSSQLVTHL). Residue lysine 159 forms a Glycyl lysine isopeptide (Lys-Gly) (interchain with G-Cter in SUMO1, SUMO2 and SUMO3) linkage. Lysine 167 participates in a covalent cross-link: Glycyl lysine isopeptide (Lys-Gly) (interchain with G-Cter in SUMO2). Positions 182-303 (LLQGGTSRKP…LSDDEGHFTS (122 aa)) are disordered. At serine 235 the chain carries Phosphoserine. Over residues 248 to 271 (ESEKGDLRSEQPCFKSDHGRRFTM) the composition is skewed to basic and acidic residues. Residue lysine 279 forms a Glycyl lysine isopeptide (Lys-Gly) (interchain with G-Cter in SUMO1); alternate linkage. A Glycyl lysine isopeptide (Lys-Gly) (interchain with G-Cter in SUMO1, SUMO2 and SUMO3); alternate cross-link involves residue lysine 279. Lysine 279 participates in a covalent cross-link: Glycyl lysine isopeptide (Lys-Gly) (interchain with G-Cter in SUMO2); alternate. Lysine 288 is covalently cross-linked (Glycyl lysine isopeptide (Lys-Gly) (interchain with G-Cter in SUMO2)). Phosphoserine is present on serine 383.

In terms of assembly, homodimer. Heterodimer with BHLHE41/DEC2. Interacts with TCF3/E47. Interacts with ubiquitin-conjugating enzyme UBE2I/UBC9. Interacts with HDAC1, SUMO1, RXRA and BMAL1. Ubiquitinated; which may lead to proteasomal degradation. Post-translationally, sumoylation inhibits its ubiquitination and promotes its negative regulation of the CLOCK-BMAL1 heterodimer transcriptional activator activity. In terms of tissue distribution, expressed in cartilage, spleen, intestine, lung, and to a lesser extent in heart, brain, liver, muscle and stomach.

Its subcellular location is the cytoplasm. The protein localises to the nucleus. Its function is as follows. Transcriptional repressor involved in the regulation of the circadian rhythm by negatively regulating the activity of the clock genes and clock-controlled genes. Acts as the negative limb of a novel autoregulatory feedback loop (DEC loop) which differs from the one formed by the PER and CRY transcriptional repressors (PER/CRY loop). Both these loops are interlocked as it represses the expression of PER1/2 and in turn is repressed by PER1/2 and CRY1/2. Represses the activity of the circadian transcriptional activator: CLOCK-BMAL1|BMAL2 heterodimer by competing for the binding to E-box elements (5'-CACGTG-3') found within the promoters of its target genes. Negatively regulates its own expression and the expression of DBP and BHLHE41/DEC2. Acts as a corepressor of RXR and the RXR-LXR heterodimers and represses the ligand-induced RXRA and NR1H3/LXRA transactivation activity. May be involved in the regulation of chondrocyte differentiation via the cAMP pathway. Represses the transcription of NR0B2 and attentuates the transactivation of NR0B2 by the CLOCK-BMAL1 complex. Drives the circadian rhythm of blood pressure through transcriptional repression of ATP1B1 in the cardiovascular system. This chain is Class E basic helix-loop-helix protein 40 (BHLHE40), found in Homo sapiens (Human).